Here is a 265-residue protein sequence, read N- to C-terminus: Ribonuclease 3 (265 aa).

One can recognise an RNase III domain in the interval 34–157 (LAVLTRKLGY…LIGAIYLDSQ (124 aa)). Mg(2+) is bound at residue Glu-70. The active site involves Asp-74. 2 residues coordinate Mg(2+): Asp-143 and Glu-146. Residue Glu-146 is part of the active site. The region spanning 185 to 256 (DAKSRLQEWL…AELMINQLHK (72 aa)) is the DRBM domain.

This sequence belongs to the ribonuclease III family. Homodimer. Mg(2+) serves as cofactor.

The protein resides in the cytoplasm. The enzyme catalyses Endonucleolytic cleavage to 5'-phosphomonoester.. In terms of biological role, digests double-stranded RNA. Involved in the processing of primary rRNA transcript to yield the immediate precursors to the large and small rRNAs (23S and 16S). Processes some mRNAs, and tRNAs when they are encoded in the rRNA operon. Processes pre-crRNA and tracrRNA of type II CRISPR loci if present in the organism. The polypeptide is Ribonuclease 3 (Psychrobacter arcticus (strain DSM 17307 / VKM B-2377 / 273-4)).